Reading from the N-terminus, the 474-residue chain is Melanopsin (474 aa).

Residues 1-72 (MNSPSESRVP…VDVPDHAHYT (72 aa)) lie on the Extracellular side of the membrane. 2 N-linked (GlcNAc...) asparagine glycosylation sites follow: N31 and N35. A helical transmembrane segment spans residues 73-93 (LGTVILLVGLTGMLGNLTVIY). The Cytoplasmic segment spans residues 94 to 107 (TFCRNRGLRTPANM). Residues 108–128 (LIINLAVSDFLMSFTQAPVFF) traverse the membrane as a helical segment. Topologically, residues 129 to 144 (ASSLYKKWLFGETGCK) are extracellular. A disulfide bridge connects residues C143 and C221. A helical transmembrane segment spans residues 145–165 (FYAFCGAVFGIVSMITLTAIA). Over 166 to 188 (MDRYLVITRPLATIGMRSKRRTA) the chain is Cytoplasmic. The helical transmembrane segment at 189–209 (LVLLGVWLYALAWSLPPFFGW) threads the bilayer. Residues 210 to 238 (SAYVPEGLLTSCSWDYVTFTPLVRAYTML) are Extracellular-facing. Residues 239–259 (LFCFVFFLPLLIIIFCYIFIF) form a helical membrane-spanning segment. Topologically, residues 260-293 (RAIRETGRACEGCGESPLRRRQWQRLQSEWKMAK) are cytoplasmic. A helical membrane pass occupies residues 294–314 (VALIVILLFVLSWAPYSTVAL). Topologically, residues 315–355 (VGFAGYSHILTPYMSSVPAVIAKASAIHNPIIYAITHPKYR) are extracellular. N6-(retinylidene)lysine is present on K337. A helical transmembrane segment spans residues 356–372 (AAIAQHLPCLGVLLGVS). Topologically, residues 373–474 (GQRSHPSLSY…RHLPSLDRRM (102 aa)) are cytoplasmic. A disordered region spans residues 428–474 (AAQQASGQSFCSHDLEDGEVKAPSSPQEQKSKTPKTKRHLPSLDRRM).

The protein belongs to the G-protein coupled receptor 1 family. Opsin subfamily. In terms of tissue distribution, eye; expressed in a photosensitive subset of retinal ganglion cells (at protein level).

The protein localises to the cell membrane. Its subcellular location is the cell projection. It localises to the axon. The protein resides in the dendrite. It is found in the perikaryon. Its function is as follows. Photoreceptor that binds cis-retinaldehydes. Contributes to pupillar reflex, photoentrainment and other non-image forming responses to light. May be involved in the optokinetic visual tracking response. May be involved in the regulation of retinal hyaloid vessel growth and regression. This is Melanopsin from Rattus norvegicus (Rat).